A 217-amino-acid chain; its full sequence is Small ribosomal subunit protein uS3 (217 aa).

Residues 29–97 (ADYLHEDLAI…AQLNKLTGKQ (69 aa)) form the KH type-2 domain.

It belongs to the universal ribosomal protein uS3 family. As to quaternary structure, part of the 30S ribosomal subunit. Forms a tight complex with proteins S10 and S14.

Its function is as follows. Binds the lower part of the 30S subunit head. Binds mRNA in the 70S ribosome, positioning it for translation. The polypeptide is Small ribosomal subunit protein uS3 (Streptococcus mutans serotype c (strain ATCC 700610 / UA159)).